The sequence spans 430 residues: Gamma-glutamyl phosphate reductase (430 aa).

This sequence belongs to the gamma-glutamyl phosphate reductase family.

It localises to the cytoplasm. It carries out the reaction L-glutamate 5-semialdehyde + phosphate + NADP(+) = L-glutamyl 5-phosphate + NADPH + H(+). It functions in the pathway amino-acid biosynthesis; L-proline biosynthesis; L-glutamate 5-semialdehyde from L-glutamate: step 2/2. Its function is as follows. Catalyzes the NADPH-dependent reduction of L-glutamate 5-phosphate into L-glutamate 5-semialdehyde and phosphate. The product spontaneously undergoes cyclization to form 1-pyrroline-5-carboxylate. This chain is Gamma-glutamyl phosphate reductase, found in Rhodopseudomonas palustris (strain HaA2).